A 163-amino-acid chain; its full sequence is Large ribosomal subunit protein bL17 (163 aa).

The interval valine 127–glutamate 163 is disordered. Residues lysine 129–lysine 138 are compositionally biased toward basic residues. Positions glutamate 142 to threonine 154 are enriched in low complexity.

The protein belongs to the bacterial ribosomal protein bL17 family. In terms of assembly, part of the 50S ribosomal subunit. Contacts protein L32.

The chain is Large ribosomal subunit protein bL17 from Bacteroides thetaiotaomicron (strain ATCC 29148 / DSM 2079 / JCM 5827 / CCUG 10774 / NCTC 10582 / VPI-5482 / E50).